The sequence spans 615 residues: Zinc metalloproteinase-disintegrin-like (615 aa).

The N-terminal stretch at 1 to 20 (MIQALLVTICLVGFPHQGSS) is a signal peptide. A propeptide spanning residues 21 to 195 (IILESGNVKD…KMNFQSANNP (175 aa)) is cleaved from the precursor. Residues 204 to 400 (KYIKLAVVVD…DLPQCILNKP (197 aa)) form the Peptidase M12B domain. Intrachain disulfides connect Cys315–Cys395, Cys355–Cys379, and Cys357–Cys362. His340 is a binding site for Zn(2+). The active site involves Glu341. Positions 344 and 350 each coordinate Zn(2+). One can recognise a Disintegrin domain in the interval 408–494 (PAVCGNNFVE…DCPMDGLQRN (87 aa)). Positions 410, 413, 415, 417, and 423 each coordinate Ca(2+). Cystine bridges form between Cys411–Cys440, Cys422–Cys435, Cys424–Cys430, Cys434–Cys457, Cys448–Cys454, Cys453–Cys479, Cys466–Cys486, Cys473–Cys505, Cys498–Cys510, Cys517–Cys567, Cys532–Cys576, Cys545–Cys555, Cys562–Cys602, and Cys596–Cys608. A D/ECD-tripeptide motif is present at residues 472-474 (DCD).

The protein belongs to the venom metalloproteinase (M12B) family. P-III subfamily. P-IIIa sub-subfamily. As to quaternary structure, monomer. It depends on Zn(2+) as a cofactor. In terms of tissue distribution, expressed by the venom gland.

It localises to the secreted. In terms of biological role, snake venom zinc metalloprotease that may induce platelet aggregation. This chain is Zinc metalloproteinase-disintegrin-like, found in Cerberus rynchops (Dog-faced water snake).